Consider the following 171-residue polypeptide: UPF0398 protein Sez_1569 (171 aa).

The protein belongs to the UPF0398 family.

The polypeptide is UPF0398 protein Sez_1569 (Streptococcus equi subsp. zooepidemicus (strain MGCS10565)).